We begin with the raw amino-acid sequence, 688 residues long: Sciellin (688 aa).

The span at 1–25 (MSNVTLRKMSPTGNEMKSTTQGTTR) shows a compositional bias: polar residues. Residues 1-29 (MSNVTLRKMSPTGNEMKSTTQGTTRKQQD) are disordered. At Lys-83 the chain carries N6-acetyllysine. The interval 134–231 (QPGGSLNANT…TNRSAERNIR (98 aa)) is disordered. The span at 140 to 154 (NANTSNTIASTSATT) shows a compositional bias: low complexity. A compositionally biased stretch (pro residues) spans 186-195 (VHPPIPPKPS). 16 repeat units span residues 251 to 266 (GEELDNLIKMNKSLNR), 267 to 286 (NQGLDSLFRANPKVEEREKR), 287 to 306 (AKSLESLIYMSTRTDKDGKG), 307 to 326 (IQSLGSPIKVNQRTDKNEKG), 327 to 346 (RQNLESVAKVNARMNKTSRR), 347 to 366 (SEDLDNATEVNPKGHENTTG), 367 to 386 (KKDLDGLIKVDPETNKNITR), 387 to 406 (GQSLDNLIKVTPEVKRSNQG), 407 to 426 (SKDLNNFIKVYPGTEKSTEG), 427 to 446 (GQSLDSLIKVTPERNRTNQG), 447 to 465 (NQDLENLIKVIPSANKSSE), 466 to 484 (QGLDEHINVSPKAVKNTDG), 485 to 504 (KQDLDKLIKVNPEIFTNNQR), 505 to 523 (NQDLANLIKVNPAVIRNNQ), 524 to 543 (SQDLDNLIKVKPSALRNTNR), and 544 to 563 (DQNLENLIEVNSHVSENKNG). The 16 X approximate tandem repeats stretch occupies residues 251 to 563 (GEELDNLIKM…NSHVSENKNG (313 aa)). At Ser-289 the chain carries Phosphoserine. The tract at residues 340 to 373 (MNKTSRRSEDLDNATEVNPKGHENTTGKKDLDGL) is disordered. Positions 358–373 (PKGHENTTGKKDLDGL) are enriched in basic and acidic residues. The residue at position 389 (Ser-389) is a Phosphoserine. One can recognise an LIM zinc-binding domain in the interval 619-685 (DMCTYCRKPL…EPCYSKIMAK (67 aa)).

In terms of tissue distribution, highly expressed in esophagus. It is also expressed in keratinocytes, amniotic tissue, foreskin stratum spinosum and stratum granulosum, hair follicle and nail.

The protein resides in the cytoplasm. It is found in the membrane. Functionally, may function in the assembly or regulation of proteins in the cornified envelope. The LIM domain may be involved in homotypic or heterotypic associations and may function to localize sciellin to the cornified envelope. In Homo sapiens (Human), this protein is Sciellin (SCEL).